Here is a 167-residue protein sequence, read N- to C-terminus: NAD(P)H-quinone oxidoreductase subunit I, chloroplastic (167 aa).

2 consecutive 4Fe-4S ferredoxin-type domains span residues 55–84 and 95–124; these read GRIHFEFDKCIACEVCVRVCPIDLPVVDWK and LNYSIDFGICIFCGNCVEYCPTNCLSMTEE. The [4Fe-4S] cluster site is built by cysteine 64, cysteine 67, cysteine 70, cysteine 74, cysteine 104, cysteine 107, cysteine 110, and cysteine 114.

Belongs to the complex I 23 kDa subunit family. In terms of assembly, NDH is composed of at least 16 different subunits, 5 of which are encoded in the nucleus. [4Fe-4S] cluster is required as a cofactor.

It is found in the plastid. The protein localises to the chloroplast thylakoid membrane. It catalyses the reaction a plastoquinone + NADH + (n+1) H(+)(in) = a plastoquinol + NAD(+) + n H(+)(out). The enzyme catalyses a plastoquinone + NADPH + (n+1) H(+)(in) = a plastoquinol + NADP(+) + n H(+)(out). In terms of biological role, NDH shuttles electrons from NAD(P)H:plastoquinone, via FMN and iron-sulfur (Fe-S) centers, to quinones in the photosynthetic chain and possibly in a chloroplast respiratory chain. The immediate electron acceptor for the enzyme in this species is believed to be plastoquinone. Couples the redox reaction to proton translocation, and thus conserves the redox energy in a proton gradient. In Solanum tuberosum (Potato), this protein is NAD(P)H-quinone oxidoreductase subunit I, chloroplastic.